The following is a 143-amino-acid chain: Large ribosomal subunit protein uL15 (143 aa).

The segment at 1–45 is disordered; it reads MLLNTVQPGVGAKHAKRRVGRGIGSGLGKTCGRGHKGQKSRAGGF. Residues 21 to 31 show a composition bias toward gly residues; that stretch reads RGIGSGLGKTC.

It belongs to the universal ribosomal protein uL15 family. As to quaternary structure, part of the 50S ribosomal subunit.

Its function is as follows. Binds to the 23S rRNA. This Chromobacterium violaceum (strain ATCC 12472 / DSM 30191 / JCM 1249 / CCUG 213 / NBRC 12614 / NCIMB 9131 / NCTC 9757 / MK) protein is Large ribosomal subunit protein uL15.